A 67-amino-acid polypeptide reads, in one-letter code: Large ribosomal subunit protein uL30 (67 aa).

The protein belongs to the universal ribosomal protein uL30 family. As to quaternary structure, part of the 50S ribosomal subunit.

This chain is Large ribosomal subunit protein uL30, found in Thermotoga neapolitana (strain ATCC 49049 / DSM 4359 / NBRC 107923 / NS-E).